The following is a 359-amino-acid chain: Chorismate synthase (359 aa).

Arg-47 contacts NADP(+). Residues 123-125 (RSS), Gly-283, 298-302 (KPTSS), and Arg-326 contribute to the FMN site.

This sequence belongs to the chorismate synthase family. In terms of assembly, homotetramer. FMNH2 serves as cofactor.

It carries out the reaction 5-O-(1-carboxyvinyl)-3-phosphoshikimate = chorismate + phosphate. It functions in the pathway metabolic intermediate biosynthesis; chorismate biosynthesis; chorismate from D-erythrose 4-phosphate and phosphoenolpyruvate: step 7/7. Catalyzes the anti-1,4-elimination of the C-3 phosphate and the C-6 proR hydrogen from 5-enolpyruvylshikimate-3-phosphate (EPSP) to yield chorismate, which is the branch point compound that serves as the starting substrate for the three terminal pathways of aromatic amino acid biosynthesis. This reaction introduces a second double bond into the aromatic ring system. The polypeptide is Chorismate synthase (Chlamydia felis (strain Fe/C-56) (Chlamydophila felis)).